Reading from the N-terminus, the 533-residue chain is Tyrosine-protein kinase transforming protein Fps (533 aa).

The interval 1-46 (ASGQLHRPQPQEHTSTSAAAGTWRHTQASESRHRLPHCSAAPSHQD) is disordered. Over residues 11–29 (QEHTSTSAAAGTWRHTQAS) the composition is skewed to polar residues. Positions 50–124 (MGFGPELWCP…LQEDRQSVCS (75 aa)) constitute an F-BAR; degenerate domain. The region spanning 171-260 (WYHGAIPRSE…KSGIVLTRAV (90 aa)) is the SH2 domain. Residues 272 to 525 (VLLGERIGRG…PSFGAVHQDL (254 aa)) form the Protein kinase domain. Residues 278–286 (IGRGNFGEV) and Lys-301 each bind ATP. Asp-394 (proton acceptor) is an active-site residue. Tyr-424 bears the Phosphotyrosine; by autocatalysis mark.

It belongs to the protein kinase superfamily. Tyr protein kinase family. Fes/fps subfamily.

It catalyses the reaction L-tyrosyl-[protein] + ATP = O-phospho-L-tyrosyl-[protein] + ADP + H(+). The polypeptide is Tyrosine-protein kinase transforming protein Fps (V-FPS) (Gallus gallus (Chicken)).